Here is a 227-residue protein sequence, read N- to C-terminus: Cytochrome c oxidase subunit 2 (227 aa).

Residue Met-1 is modified to N-formylmethionine. The Mitochondrial intermembrane segment spans residues 1–14; the sequence is MAYPMQLGFQDATS. A helical transmembrane segment spans residues 15–45; the sequence is PIMEELLHFHDHTLMIVFLISSLVLYIISLM. Residues 46 to 59 are Mitochondrial matrix-facing; the sequence is LTTKLTHTSTMDAQ. The chain crosses the membrane as a helical span at residues 60–87; sequence EVETIWTILPAIILILIALPSLRILYMM. Residues 88–227 lie on the Mitochondrial intermembrane side of the membrane; sequence DEINNPSLTV…YFEKWSASML (140 aa). The Cu cation site is built by His-161, Cys-196, Glu-198, Cys-200, His-204, and Met-207. Residue Glu-198 participates in Mg(2+) binding. Position 218 is a phosphotyrosine (Tyr-218).

The protein belongs to the cytochrome c oxidase subunit 2 family. Component of the cytochrome c oxidase (complex IV, CIV), a multisubunit enzyme composed of 14 subunits. The complex is composed of a catalytic core of 3 subunits MT-CO1, MT-CO2 and MT-CO3, encoded in the mitochondrial DNA, and 11 supernumerary subunits COX4I, COX5A, COX5B, COX6A, COX6B, COX6C, COX7A, COX7B, COX7C, COX8 and NDUFA4, which are encoded in the nuclear genome. The complex exists as a monomer or a dimer and forms supercomplexes (SCs) in the inner mitochondrial membrane with NADH-ubiquinone oxidoreductase (complex I, CI) and ubiquinol-cytochrome c oxidoreductase (cytochrome b-c1 complex, complex III, CIII), resulting in different assemblies (supercomplex SCI(1)III(2)IV(1) and megacomplex MCI(2)III(2)IV(2)). Found in a complex with TMEM177, COA6, COX18, COX20, SCO1 and SCO2. Interacts with TMEM177 in a COX20-dependent manner. Interacts with COX20. Interacts with COX16. Cu cation is required as a cofactor.

The protein localises to the mitochondrion inner membrane. The enzyme catalyses 4 Fe(II)-[cytochrome c] + O2 + 8 H(+)(in) = 4 Fe(III)-[cytochrome c] + 2 H2O + 4 H(+)(out). Its function is as follows. Component of the cytochrome c oxidase, the last enzyme in the mitochondrial electron transport chain which drives oxidative phosphorylation. The respiratory chain contains 3 multisubunit complexes succinate dehydrogenase (complex II, CII), ubiquinol-cytochrome c oxidoreductase (cytochrome b-c1 complex, complex III, CIII) and cytochrome c oxidase (complex IV, CIV), that cooperate to transfer electrons derived from NADH and succinate to molecular oxygen, creating an electrochemical gradient over the inner membrane that drives transmembrane transport and the ATP synthase. Cytochrome c oxidase is the component of the respiratory chain that catalyzes the reduction of oxygen to water. Electrons originating from reduced cytochrome c in the intermembrane space (IMS) are transferred via the dinuclear copper A center (CU(A)) of subunit 2 and heme A of subunit 1 to the active site in subunit 1, a binuclear center (BNC) formed by heme A3 and copper B (CU(B)). The BNC reduces molecular oxygen to 2 water molecules using 4 electrons from cytochrome c in the IMS and 4 protons from the mitochondrial matrix. The polypeptide is Cytochrome c oxidase subunit 2 (MT-CO2) (Bos indicus (Zebu)).